A 189-amino-acid chain; its full sequence is UPF0301 protein CF0373 (189 aa).

The protein belongs to the UPF0301 (AlgH) family.

This chain is UPF0301 protein CF0373, found in Chlamydia felis (strain Fe/C-56) (Chlamydophila felis).